A 365-amino-acid polypeptide reads, in one-letter code: Flagellin 1 (365 aa).

This sequence belongs to the bacterial flagellin family.

The protein localises to the secreted. The protein resides in the bacterial flagellum. Its function is as follows. Flagellin is the subunit protein which polymerizes to form the filaments of bacterial flagella. The protein is Flagellin 1 (fliC1) of Proteus mirabilis.